Here is a 326-residue protein sequence, read N- to C-terminus: Dehydrogenase/reductase SDR family protein 7-like (326 aa).

At methionine 1–valine 17 the chain is on the cytoplasmic side. The helical; Signal-anchor for type II membrane protein transmembrane segment at leucine 18–isoleucine 38 threads the bilayer. At tryptophan 39–threonine 326 the chain is on the peroxisomal side. Leucine 57–isoleucine 81 is an NAD(+) binding site. Serine 193 contributes to the substrate binding site. The active-site Proton acceptor is tyrosine 206.

Belongs to the short-chain dehydrogenases/reductases (SDR) family.

Its subcellular location is the peroxisome membrane. Putative oxidoreductase. This chain is Dehydrogenase/reductase SDR family protein 7-like, found in Drosophila melanogaster (Fruit fly).